Here is a 229-residue protein sequence, read N- to C-terminus: Cytochrome c oxidase subunit 2 (229 aa).

Topologically, residues M1 to H26 are mitochondrial intermembrane. Residues A27–N48 traverse the membrane as a helical segment. At S49–E62 the chain is on the mitochondrial matrix side. Residues M63 to R82 form a helical membrane-spanning segment. Topologically, residues L83–S229 are mitochondrial intermembrane. 6 residues coordinate Cu cation: H161, C196, E198, C200, H204, and M207. E198 is a Mg(2+) binding site.

It belongs to the cytochrome c oxidase subunit 2 family. Component of the cytochrome c oxidase (complex IV, CIV), a multisubunit enzyme composed of a catalytic core of 3 subunits and several supernumerary subunits. The complex exists as a monomer or a dimer and forms supercomplexes (SCs) in the inner mitochondrial membrane with ubiquinol-cytochrome c oxidoreductase (cytochrome b-c1 complex, complex III, CIII). Cu cation is required as a cofactor.

It localises to the mitochondrion inner membrane. The enzyme catalyses 4 Fe(II)-[cytochrome c] + O2 + 8 H(+)(in) = 4 Fe(III)-[cytochrome c] + 2 H2O + 4 H(+)(out). Functionally, component of the cytochrome c oxidase, the last enzyme in the mitochondrial electron transport chain which drives oxidative phosphorylation. The respiratory chain contains 3 multisubunit complexes succinate dehydrogenase (complex II, CII), ubiquinol-cytochrome c oxidoreductase (cytochrome b-c1 complex, complex III, CIII) and cytochrome c oxidase (complex IV, CIV), that cooperate to transfer electrons derived from NADH and succinate to molecular oxygen, creating an electrochemical gradient over the inner membrane that drives transmembrane transport and the ATP synthase. Cytochrome c oxidase is the component of the respiratory chain that catalyzes the reduction of oxygen to water. Electrons originating from reduced cytochrome c in the intermembrane space (IMS) are transferred via the dinuclear copper A center (CU(A)) of subunit 2 and heme A of subunit 1 to the active site in subunit 1, a binuclear center (BNC) formed by heme A3 and copper B (CU(B)). The BNC reduces molecular oxygen to 2 water molecules using 4 electrons from cytochrome c in the IMS and 4 protons from the mitochondrial matrix. This Drosophila narragansett (Fruit fly) protein is Cytochrome c oxidase subunit 2 (mt:CoII).